We begin with the raw amino-acid sequence, 161 residues long: Cyclic pyranopterin monophosphate synthase (161 aa).

Substrate contacts are provided by residues 75 to 77 and 113 to 114; these read LCH and ME. Residue Asp128 is part of the active site.

Belongs to the MoaC family. Homohexamer; trimer of dimers.

The enzyme catalyses (8S)-3',8-cyclo-7,8-dihydroguanosine 5'-triphosphate = cyclic pyranopterin phosphate + diphosphate. It participates in cofactor biosynthesis; molybdopterin biosynthesis. In terms of biological role, catalyzes the conversion of (8S)-3',8-cyclo-7,8-dihydroguanosine 5'-triphosphate to cyclic pyranopterin monophosphate (cPMP). In Escherichia coli O139:H28 (strain E24377A / ETEC), this protein is Cyclic pyranopterin monophosphate synthase.